The following is a 418-amino-acid chain: 1-acylglycerol-3-phosphate O-acyltransferase (418 aa).

The AB hydrolase-1 domain occupies 121 to 251; that stretch reads PTLVMVHGYG…RATWKGAVLN (131 aa). The GXSXG motif lies at 197 to 201; it reads GHSFG. The short motif at 379–384 is the HXXXXD motif element; sequence HFVFID.

Belongs to the peptidase S33 family. ABHD4/ABHD5 subfamily.

The protein localises to the cytoplasm. It carries out the reaction a 1-acyl-sn-glycero-3-phosphate + an acyl-CoA = a 1,2-diacyl-sn-glycero-3-phosphate + CoA. Its function is as follows. Lysophosphatidic acid acyltransferase which functions in phosphatidic acid biosynthesis. Is highly specific for lysophosphatidic acid and able to use different acyl-CoA donors. May regulate neutral lipid accumulation and participate in the regulation of lipid turnover in vegetative cells. Possesses additional triacylglycerol lipase and phospholipase A2 activities in vitro. Is not active as esterase or lysophospholipase. The sequence is that of 1-acylglycerol-3-phosphate O-acyltransferase from Arabidopsis thaliana (Mouse-ear cress).